The sequence spans 1612 residues: MIPHSSAGVQSWGQPLHAVYSGTGRADLSQPLGQPDRQPEQPSMPVPQLQGRPPALIDLTTNDGDVLEREPPAKRLKIDVHAGSVAGDGSPASAGVGESKSTPSATTSKPPSLSWRARPVWSFQALLSEVSGSAEINGESAAGVVQDVKPPPPPSFPGPPWKFAPADTIASDSAGAQDGAPSKEVQTTPYHIETPSVAPVIRGEKVADFSPWMGNHPEDVLNEQTAKQGYYDRTQVSQNESNTARPSLYAQLKHRSGLQILSSVFAAALEKRQGHNMVTAPSTFKPPPRVTLTDNKREAWLRDLANPNVPLRKLSRTIPHGIRGRVLLDQCLTKWVPVGRAVWLAKCVGANEIRAFKRKGTSGALAIGLEAKWVRDWTANVQQFLEGVITSCGVADWKMKMTYAVSLTARLFFEQLLDHDQYLGWFLTSLEAAPFNTLPVWLLMLGIYWSNILRYRKRGRRLAELLLDKLQVAIKSDSATSLRPLTDRLSLHIRKLTLEHTSSMVLPQSWEKYKDLLSSCLDLNDNVHRAVFQNLAERNARVQRPRKCEETTQQPPQQRVIQLFDSIGSSNDITSVSAASLGAIDDKAALVLKLLEWAATPFRYGVSRVYTGARLLRKWKIAGVDVDTSIISFLGESQMRDQLNMDNIYHIVSELVRSQTFSVGKYLQWLMAKGVADFPQNSDHQPLSGDLALLMQLPVSRLPEHVHNLRNTLLHRAGVEVSKESSTIAILKASIAERLPRIFGSVATSAVSRDPLPSDLTWAVKSELGQWIRRGVTEFGRDPRRAFQDLHSAPSAEHFALTPGEFYTVRDILESFGDLSILADVLKQATVCNDGIVLASAADTVNYHFRSFCVIGATTDLFKRLVESYARLKRLGSTSLDLIFSLIDLGLRLPGELNTVALLRQDLSRIESKSSMAAPSPLSDHIPSSFNETDPLFLLKLDQLLSSASGIDESTLDTIFNLLIKQIESSGGHAKLSVNETCRYLSYLRPFHPKRFDIMIVRWICGLLRSTTGGILSQVLPPLIGVGCVTIQAFVFLVRRLLKSENMMSNQRDLRIDLLQLLVPPPAGQSRYFDMVTYRFHLSRKEFLFKHPEEVFDIIRDAIALIDSQSQEGNYRQVDLGHSAMVLLQILLTKNPESAVKHCTEKLIGQHPSAVTVLTRALDSLLGLDTKAGERLFTSNGSFIFITIDTGPAAPDISVAEKVIELTNDFSLPFCRLKLQLLFNAETKGDVRNEIVDVMFKAAVADSRSRRSNWVGLVRLMSHDAVRQIRERAEKNFFAIPLFEESPDGCSSFAADNSSSLETAKLYLAIIEKLAYSIPDVGPQAVVPVLTEKMDLLLQRLITMQANYSGTTELSHGVDAEHMIRSRTQFERALAFWFSALLRMIVLHRTAFSVPSAAVRPSALPEQTRLLISIFCITLARLPDSVLRLFPAADYFPHSMTAGDCRPCPGILLQTHALDVAASLIDTFPDEARHQCARYLREKCPPFARVQNDSRFLYLLGPLGDSPSSNITLPVSIPSPAASGSTPAPTPSGNPTGGFSHPQQPAFVSGVPTGLPDGLNCAASHLCLQYRGRAIGAYPVRPWELLEDAAPIAGTNDTAVSLGYFDARRVRV.

Disordered stretches follow at residues 18–114 (AVYS…PSLS) and 1514–1547 (PVSI…QPAF). Residues 66–80 (VLEREPPAKRLKIDV) show a composition bias toward basic and acidic residues. 2 stretches are compositionally biased toward low complexity: residues 99–114 (SKST…PSLS) and 1518–1538 (PSPA…PTGG).

Belongs to the Mediator complex subunit 12 family. As to quaternary structure, component of the srb8-11 complex, which itself associates with the Mediator complex.

It localises to the nucleus. In terms of biological role, component of the srb8-11 complex. The srb8-11 complex is a regulatory module of the Mediator complex which is itself involved in regulation of basal and activated RNA polymerase II-dependent transcription. The srb8-11 complex may be involved in the transcriptional repression of a subset of genes regulated by Mediator. It may inhibit the association of the Mediator complex with RNA polymerase II to form the holoenzyme complex. This chain is Mediator of RNA polymerase II transcription subunit 12 (srb8), found in Neosartorya fischeri (strain ATCC 1020 / DSM 3700 / CBS 544.65 / FGSC A1164 / JCM 1740 / NRRL 181 / WB 181) (Aspergillus fischerianus).